We begin with the raw amino-acid sequence, 207 residues long: Outer-membrane lipoprotein LolB (207 aa).

The signal sequence occupies residues 1–21 (MPLPDFRLIRLLPLAALVLTA). A lipid anchor (N-palmitoyl cysteine) is attached at Cys-22. A lipid anchor (S-diacylglycerol cysteine) is attached at Cys-22.

This sequence belongs to the LolB family. As to quaternary structure, monomer.

The protein resides in the cell outer membrane. Its function is as follows. Plays a critical role in the incorporation of lipoproteins in the outer membrane after they are released by the LolA protein. This is Outer-membrane lipoprotein LolB from Shigella dysenteriae serotype 1 (strain Sd197).